The chain runs to 86 residues: MANIKSQKKRILTNEKARLRNNAVKSELKTAIRAVNTAVESTDKDAAAAALVAASRKLDKAVSKGVLHKNNAANRKSAISKKVNAL.

The protein belongs to the bacterial ribosomal protein bS20 family.

Binds directly to 16S ribosomal RNA. The sequence is that of Small ribosomal subunit protein bS20 from Arthrobacter sp. (strain FB24).